A 261-amino-acid polypeptide reads, in one-letter code: Lys-63-specific deubiquitinase BRCC36 (261 aa).

The MPN domain maps to 6–149; that stretch reads VHIQGDAFLV…YTCFQSVQAQ (144 aa). Zn(2+)-binding residues include H92, H94, and D105. Residues 92–105 carry the JAMM motif motif; the sequence is HSHPHITVWPSHVD.

It belongs to the peptidase M67A family. BRCC36 subfamily. Component of the BRCA1-A complex, at least composed of brca1, bard1, uimc1/rap80, abraxas1, brcc3/brcc36, babam2 and babam1/nba1. In the BRCA1-A complex, interacts directly with abraxas1 and babam2. Component of the BRISC complex, at least composed of abraxas2, brcc3/brcc36, babam2 and babam1/nba1. Within the complex, interacts directly with abraxas2. Both the BRCA1-A complex and the BRISC complex bind polyubiquitin. It depends on Zn(2+) as a cofactor.

The protein resides in the nucleus. The protein localises to the cytoplasm. It is found in the cytoskeleton. Its subcellular location is the spindle pole. Metalloprotease that specifically cleaves 'Lys-63'-linked polyubiquitin chains. Does not have activity toward 'Lys-48'-linked polyubiquitin chains. Component of the BRCA1-A complex, a complex that specifically recognizes 'Lys-63'-linked ubiquitinated histones H2A and H2AX at DNA lesions sites, leading to target the brca1-bard1 heterodimer to sites of DNA damage at double-strand breaks (DSBs). In the BRCA1-A complex, it specifically removes 'Lys-63'-linked ubiquitin on histones H2A and H2AX, antagonizing the rnf8-dependent ubiquitination at double-strand breaks (DSBs). Catalytic subunit of the BRISC complex, a multiprotein complex that specifically cleaves 'Lys-63'-linked ubiquitin in various substrates. Mediates the specific 'Lys-63'-specific deubiquitination associated with the COP9 signalosome complex (CSN), via the interaction of the BRISC complex with the CSN complex. The BRISC complex is required for normal mitotic spindle assembly and microtubule attachment to kinetochores via its role in deubiquitinating numa1. Plays a role in interferon signaling via its role in the deubiquitination of the interferon receptor ifnar1; deubiquitination increases ifnar1 activity by enhancing its stability and cell surface expression. Acts as a regulator of the NLRP3 inflammasome by mediating deubiquitination of nlrp3. Down-regulates the response to bacterial lipopolysaccharide (LPS) via its role in ifnar1 deubiquitination. The sequence is that of Lys-63-specific deubiquitinase BRCC36 (brcc3) from Xenopus tropicalis (Western clawed frog).